The chain runs to 171 residues: Der GTPase-activating protein YihI (171 aa).

2 disordered regions span residues 1 to 99 and 145 to 171; these read MKKP…PQAE and GLSY…KGGN. The segment covering 20-30 has biased composition (basic and acidic residues); sequence TREELNQEARD. The span at 40-59 shows a compositional bias: low complexity; sequence HSAGSRANGSSASGSTAQNS. Positions 148–160 are enriched in acidic residues; it reads YEDDEDDEEEEKQ.

Belongs to the YihI family. Interacts with Der.

Its function is as follows. A GTPase-activating protein (GAP) that modifies Der/EngA GTPase function. May play a role in ribosome biogenesis. The polypeptide is Der GTPase-activating protein YihI (Enterobacter sp. (strain 638)).